We begin with the raw amino-acid sequence, 175 residues long: tRNA (cytidine(56)-2'-O)-methyltransferase (175 aa).

An S-adenosyl-L-methionine-binding site is contributed by leucine 83.

Belongs to the aTrm56 family. In terms of assembly, homodimer.

Its subcellular location is the cytoplasm. It catalyses the reaction cytidine(56) in tRNA + S-adenosyl-L-methionine = 2'-O-methylcytidine(56) in tRNA + S-adenosyl-L-homocysteine + H(+). Its function is as follows. Specifically catalyzes the AdoMet-dependent 2'-O-ribose methylation of cytidine at position 56 in tRNAs. The chain is tRNA (cytidine(56)-2'-O)-methyltransferase from Methanosphaera stadtmanae (strain ATCC 43021 / DSM 3091 / JCM 11832 / MCB-3).